A 474-amino-acid polypeptide reads, in one-letter code: Putative response regulator NtrX-like (474 aa).

Residues D5 to C121 form the Response regulatory domain. The residue at position 54 (D54) is a 4-aspartylphosphate. In terms of domain architecture, Sigma-54 factor interaction spans L143 to I368. ATP is bound by residues G171–E178 and A231–E240.

Member of the two-component regulatory system RC0849/RC0948. This chain is Putative response regulator NtrX-like, found in Rickettsia conorii (strain ATCC VR-613 / Malish 7).